We begin with the raw amino-acid sequence, 149 residues long: Small ribosomal subunit protein uS11z (149 aa).

Residues 130–149 form a disordered region; that stretch reads VTPVPTDSTRRKGGRRGRRL. A compositionally biased stretch (basic residues) spans 140 to 149; sequence RKGGRRGRRL.

It belongs to the universal ribosomal protein uS11 family.

The chain is Small ribosomal subunit protein uS11z from Zea mays (Maize).